The following is a 511-amino-acid chain: Membrane-bound lytic murein transglycosylase F (511 aa).

The N-terminal stretch at 1–19 is a signal peptide; sequence MKKLKINYLLIGIVTLLLA. Positions 20-269 are non-LT domain; sequence AALWPSIPWS…RLEEKYLGHG (250 aa). Positions 270 to 511 are LT domain; that stretch reads NDFDYVDTRT…ARMKLPGHLY (242 aa). The active site involves E314.

In the N-terminal section; belongs to the bacterial solute-binding protein 3 family. This sequence in the C-terminal section; belongs to the transglycosylase Slt family.

Its subcellular location is the cell outer membrane. It carries out the reaction Exolytic cleavage of the (1-&gt;4)-beta-glycosidic linkage between N-acetylmuramic acid (MurNAc) and N-acetylglucosamine (GlcNAc) residues in peptidoglycan, from either the reducing or the non-reducing ends of the peptidoglycan chains, with concomitant formation of a 1,6-anhydrobond in the MurNAc residue.. Its function is as follows. Murein-degrading enzyme that degrades murein glycan strands and insoluble, high-molecular weight murein sacculi, with the concomitant formation of a 1,6-anhydromuramoyl product. Lytic transglycosylases (LTs) play an integral role in the metabolism of the peptidoglycan (PG) sacculus. Their lytic action creates space within the PG sacculus to allow for its expansion as well as for the insertion of various structures such as secretion systems and flagella. The protein is Membrane-bound lytic murein transglycosylase F of Klebsiella pneumoniae subsp. pneumoniae (strain ATCC 700721 / MGH 78578).